A 439-amino-acid chain; its full sequence is ATP-dependent protease ATPase subunit HslU (439 aa).

ATP contacts are provided by residues isoleucine 17, 59–64 (GVGKTE), aspartate 251, glutamate 317, and arginine 389.

It belongs to the ClpX chaperone family. HslU subfamily. In terms of assembly, a double ring-shaped homohexamer of HslV is capped on each side by a ring-shaped HslU homohexamer. The assembly of the HslU/HslV complex is dependent on binding of ATP.

Its subcellular location is the cytoplasm. ATPase subunit of a proteasome-like degradation complex; this subunit has chaperone activity. The binding of ATP and its subsequent hydrolysis by HslU are essential for unfolding of protein substrates subsequently hydrolyzed by HslV. HslU recognizes the N-terminal part of its protein substrates and unfolds these before they are guided to HslV for hydrolysis. This is ATP-dependent protease ATPase subunit HslU from Campylobacter jejuni (strain RM1221).